The primary structure comprises 236 residues: Eukaryotic translation initiation factor 3 subunit K (236 aa).

The region spanning 48–218 is the PCI domain; it reads CDCNANRTLL…EAKKAEIRED (171 aa).

Belongs to the eIF-3 subunit K family.

It is found in the cytoplasm. Functionally, component of the eukaryotic translation initiation factor 3 (eIF-3) complex, which is involved in protein synthesis of a specialized repertoire of mRNAs and, together with other initiation factors, stimulates binding of mRNA and methionyl-tRNAi to the 40S ribosome. The eIF-3 complex specifically targets and initiates translation of a subset of mRNAs involved in cell proliferation. The sequence is that of Eukaryotic translation initiation factor 3 subunit K from Pyricularia oryzae (strain Y34) (Rice blast fungus).